Here is a 436-residue protein sequence, read N- to C-terminus: Serine protease hepsin (436 aa).

A disordered region spans residues 1–29 (MAKEDEEPGAHRGGSTCSRPQPGKGGRTA). At 1-38 (MAKEDEEPGAHRGGSTCSRPQPGKGGRTAACCSRPKVA) the chain is on the cytoplasmic side. The chain crosses the membrane as a helical; Signal-anchor for type II membrane protein span at residues 39-59 (ALIVGTLLFLTGIGAASWAIV). Residues 60–436 (TILLQSDQEP…SEASGMVTQP (377 aa)) are Extracellular-facing. Residues 73 to 170 (VQLSPGDSRL…RGRFLTATCQ (98 aa)) enclose the SRCR domain. 8 disulfides stabilise this stretch: Cys96–Cys159, Cys109–Cys169, Cys138–Cys157, Cys172–Cys296, Cys207–Cys223, Cys310–Cys378, Cys341–Cys357, and Cys368–Cys400. Residue Asn131 is glycosylated (N-linked (GlcNAc...) asparagine). Residues 182–424 (IVGGQDSSLG…FREWIFKAIK (243 aa)) enclose the Peptidase S1 domain. Active-site charge relay system residues include His222 and Asp276. The active-site Charge relay system is Ser372.

The protein belongs to the peptidase S1 family. In terms of tissue distribution, detected in kidney, in thick ascending tubule epithelial cells (at protein level). Detected in kidney and liver.

The protein resides in the apical cell membrane. It is found in the cell membrane. The protein localises to the secreted. It catalyses the reaction Cleavage after basic amino-acid residues, with Arg strongly preferred to Lys.. Functionally, serine protease that cleaves extracellular substrates, and contributes to the proteolytic processing of growth factors, such as HGF and MST1/HGFL. Plays a role in cell growth and maintenance of cell morphology. Plays a role in the proteolytic processing of ACE2. Mediates the proteolytic cleavage of urinary UMOD that is required for UMOD polymerization. In Mus musculus (Mouse), this protein is Serine protease hepsin (Hpn).